The chain runs to 322 residues: D-alanine--D-alanine ligase (322 aa).

One can recognise an ATP-grasp domain in the interval 110–310 (KAVLAAAGIP…FDRLVFWIVE (201 aa)). ATP is bound at residue 137–191 (MPPPYVVKPNAEGSSVGVSLVFEGANGPPRQLAAPDWAFGEQVMVEPYIPGLELA). 3 residues coordinate Mg(2+): aspartate 263, glutamate 277, and asparagine 279.

This sequence belongs to the D-alanine--D-alanine ligase family. Mg(2+) is required as a cofactor. It depends on Mn(2+) as a cofactor.

It is found in the cytoplasm. It carries out the reaction 2 D-alanine + ATP = D-alanyl-D-alanine + ADP + phosphate + H(+). It functions in the pathway cell wall biogenesis; peptidoglycan biosynthesis. Functionally, cell wall formation. The chain is D-alanine--D-alanine ligase from Caulobacter sp. (strain K31).